A 150-amino-acid chain; its full sequence is Macrodomain Ter protein (150 aa).

This sequence belongs to the MatP family. In terms of assembly, homodimer.

It is found in the cytoplasm. In terms of biological role, required for spatial organization of the terminus region of the chromosome (Ter macrodomain) during the cell cycle. Prevents early segregation of duplicated Ter macrodomains during cell division. Binds specifically to matS, which is a 13 bp signature motif repeated within the Ter macrodomain. The protein is Macrodomain Ter protein of Salmonella arizonae (strain ATCC BAA-731 / CDC346-86 / RSK2980).